A 141-amino-acid polypeptide reads, in one-letter code: Hemoglobin subunit alpha-A (141 aa).

The region spanning 1-141 (VLNAGDKANV…VGTVLTSKYR (141 aa)) is the Globin domain. Position 58 (histidine 58) interacts with O2. Histidine 87 lines the heme b pocket.

The protein belongs to the globin family. Heterotetramer of two alpha chains and two beta chains. As to expression, red blood cells.

In terms of biological role, involved in oxygen transport from the lung to the various peripheral tissues. The polypeptide is Hemoglobin subunit alpha-A (HBAA) (Chrysemys picta bellii (Western painted turtle)).